Here is a 96-residue protein sequence, read N- to C-terminus: Putative pterin-4-alpha-carbinolamine dehydratase (96 aa).

This sequence belongs to the pterin-4-alpha-carbinolamine dehydratase family.

The enzyme catalyses (4aS,6R)-4a-hydroxy-L-erythro-5,6,7,8-tetrahydrobiopterin = (6R)-L-erythro-6,7-dihydrobiopterin + H2O. The chain is Putative pterin-4-alpha-carbinolamine dehydratase from Paraburkholderia phytofirmans (strain DSM 17436 / LMG 22146 / PsJN) (Burkholderia phytofirmans).